A 291-amino-acid polypeptide reads, in one-letter code: Protease HtpX homolog (291 aa).

2 consecutive transmembrane segments (helical) span residues 4–24 and 38–58; these read IALF…VASL and LGAL…ISLL. His144 provides a ligand contact to Zn(2+). The active site involves Glu145. Position 148 (His148) interacts with Zn(2+). 2 consecutive transmembrane segments (helical) span residues 159 to 179 and 199 to 219; these read LIQG…GYAV and VTTI…VAWF. Residue Glu224 participates in Zn(2+) binding.

This sequence belongs to the peptidase M48B family. Zn(2+) is required as a cofactor.

It is found in the cell inner membrane. The protein is Protease HtpX homolog of Paracidovorax citrulli (strain AAC00-1) (Acidovorax citrulli).